Reading from the N-terminus, the 123-residue chain is Small ribosomal subunit protein uS12 (123 aa).

A disordered region spans residues 1-47 (MPTINQLVRKGRKKAEKKQSTPALKGGPQKRGVCTRVYTSTPKKPNS). Asp-89 carries the post-translational modification 3-methylthioaspartic acid.

The protein belongs to the universal ribosomal protein uS12 family. In terms of assembly, part of the 30S ribosomal subunit. Contacts proteins S8 and S17. May interact with IF1 in the 30S initiation complex.

With S4 and S5 plays an important role in translational accuracy. Functionally, interacts with and stabilizes bases of the 16S rRNA that are involved in tRNA selection in the A site and with the mRNA backbone. Located at the interface of the 30S and 50S subunits, it traverses the body of the 30S subunit contacting proteins on the other side and probably holding the rRNA structure together. The combined cluster of proteins S8, S12 and S17 appears to hold together the shoulder and platform of the 30S subunit. In Desulforapulum autotrophicum (strain ATCC 43914 / DSM 3382 / VKM B-1955 / HRM2) (Desulfobacterium autotrophicum), this protein is Small ribosomal subunit protein uS12.